A 413-amino-acid polypeptide reads, in one-letter code: Divalent metal cation transporter MntH (413 aa).

Transmembrane regions (helical) follow at residues 19–39 (LALMGPAFVAAIGYIDPGNFA), 46–66 (ASFGYQLLWVVVWANLMAMLI), 94–114 (VWFYWVQAEIIAMATDLAEFI), 122–142 (LVLGVSLLQGAVLTGVATFLI), 156–176 (VIGGLLLFVAVAYVVELIFSQ), 196–216 (AVFLAAGVLGATIMPHVIYLH), 241–261 (IAMTIAGFVNLAMMATAAAAF), 290–310 (IFGLSLVAAGLSSTVVGTLAG), 329–349 (AVTMLPSFVVILLGLDPTRIL), 350–370 (VMSQVLLSFGIALALVPLLIF), and 392–412 (VIVAIVVSLNGWLIVGSLLGV).

Belongs to the NRAMP family.

It localises to the cell inner membrane. In terms of biological role, h(+)-stimulated, divalent metal cation uptake system. The chain is Divalent metal cation transporter MntH from Klebsiella pneumoniae (strain 342).